A 133-amino-acid polypeptide reads, in one-letter code: MHECMIVFFIFAVVSIYYADAESCLYLGQHCNALATKKCCPPFTCKFVNQREGICVREDPGAESCLYLGQHCNALATKKCCPPFTCKFVNQREGICVREDPGVGGGCLPDKQQCRRNKDCCSKSCYRGNCRSK.

A signal peptide spans 1-21 (MHECMIVFFIFAVVSIYYADA). Intrachain disulfides connect Cys-107–Cys-121, Cys-114–Cys-125, and Cys-120–Cys-130.

The protein localises to the secreted. This is Egg protein CP422 (CP422) from Schistosoma japonicum (Blood fluke).